A 689-amino-acid chain; its full sequence is Acyl-coenzyme A oxidase 1 (689 aa).

Residues T149 and G188 each contribute to the FAD site. E444 functions as the Proton acceptor in the catalytic mechanism.

It belongs to the acyl-CoA oxidase family. Heteropentamer composed of five different subunits. FAD is required as a cofactor.

The protein localises to the peroxisome. It catalyses the reaction a 2,3-saturated acyl-CoA + O2 = a (2E)-enoyl-CoA + H2O2. The protein operates within lipid metabolism; peroxisomal fatty acid beta-oxidation. This is Acyl-coenzyme A oxidase 1 (POX1) from Yarrowia lipolytica (strain CLIB 122 / E 150) (Yeast).